The primary structure comprises 185 residues: Elongation factor P (185 aa).

The protein belongs to the elongation factor P family.

Its subcellular location is the cytoplasm. Its pathway is protein biosynthesis; polypeptide chain elongation. In terms of biological role, involved in peptide bond synthesis. Stimulates efficient translation and peptide-bond synthesis on native or reconstituted 70S ribosomes in vitro. Probably functions indirectly by altering the affinity of the ribosome for aminoacyl-tRNA, thus increasing their reactivity as acceptors for peptidyl transferase. The polypeptide is Elongation factor P (Petrotoga mobilis (strain DSM 10674 / SJ95)).